A 157-amino-acid polypeptide reads, in one-letter code: Crossover junction endodeoxyribonuclease RuvC (157 aa).

Residues Asp-7, Glu-67, and Asp-140 contribute to the active site. Residues Asp-7, Glu-67, and Asp-140 each contribute to the Mg(2+) site.

It belongs to the RuvC family. In terms of assembly, homodimer which binds Holliday junction (HJ) DNA. The HJ becomes 2-fold symmetrical on binding to RuvC with unstacked arms; it has a different conformation from HJ DNA in complex with RuvA. In the full resolvosome a probable DNA-RuvA(4)-RuvB(12)-RuvC(2) complex forms which resolves the HJ. Requires Mg(2+) as cofactor.

It is found in the cytoplasm. It catalyses the reaction Endonucleolytic cleavage at a junction such as a reciprocal single-stranded crossover between two homologous DNA duplexes (Holliday junction).. In terms of biological role, the RuvA-RuvB-RuvC complex processes Holliday junction (HJ) DNA during genetic recombination and DNA repair. Endonuclease that resolves HJ intermediates. Cleaves cruciform DNA by making single-stranded nicks across the HJ at symmetrical positions within the homologous arms, yielding a 5'-phosphate and a 3'-hydroxyl group; requires a central core of homology in the junction. The consensus cleavage sequence is 5'-(A/T)TT(C/G)-3'. Cleavage occurs on the 3'-side of the TT dinucleotide at the point of strand exchange. HJ branch migration catalyzed by RuvA-RuvB allows RuvC to scan DNA until it finds its consensus sequence, where it cleaves and resolves the cruciform DNA. The polypeptide is Crossover junction endodeoxyribonuclease RuvC (Rickettsia bellii (strain RML369-C)).